Consider the following 503-residue polypeptide: Ribonuclease Y (503 aa).

The helical transmembrane segment at 2–22 threads the bilayer; sequence GIIIGLIIVSVALIISLCSLL. In terms of domain architecture, KH spans 193 to 253; sequence TTNLVKLPND…IRREIATKTL (61 aa). The 94-residue stretch at 319–412 folds into the HD domain; the sequence is VLLHSVEVAK…VAIADAISAS (94 aa).

This sequence belongs to the RNase Y family.

The protein resides in the cell membrane. Functionally, endoribonuclease that initiates mRNA decay. The polypeptide is Ribonuclease Y (Mesoplasma florum (strain ATCC 33453 / NBRC 100688 / NCTC 11704 / L1) (Acholeplasma florum)).